The following is a 27-amino-acid chain: Secretin (27 aa).

Methionine 27 is subject to Methionine amide.

Belongs to the glucagon family.

The protein resides in the secreted. Hormone involved in different processes, such as regulation of the pH of the duodenal content, food intake and water homeostasis. Exerts its biological effects by binding to secretin receptor (SCTR), a G-protein coupled receptor expressed in the basolateral domain of several cells. This Gallus gallus (Chicken) protein is Secretin.